We begin with the raw amino-acid sequence, 361 residues long: Carbon monoxide-induced hydrogenase (361 aa).

Ni(2+) is bound by residues Cys-64, Cys-67, Cys-355, and Cys-358.

It to E.coli formate hydrogenlyase hydrogenase isozyme 3 and to bovine mitochondrial NADH-ubiquinone oxidoreductase. It depends on Ni(2+) as a cofactor.

Functionally, the carbon monoxide dehydrogenase (CODH) oxidizes carbon monoxide coupled, via CooF, to the reduction of a hydrogen cation by a hydrogenase (probably CooH). The protein is Carbon monoxide-induced hydrogenase (cooH) of Rhodospirillum rubrum.